We begin with the raw amino-acid sequence, 200 residues long: Protein GrpE (200 aa).

Acidic residues predominate over residues 1–23 (MEEEIKETSEDKEEENTEAEAVE). The tract at residues 1–39 (MEEEIKETSEDKEEENTEAEAVENNEKSEENAGNVEEDE) is disordered.

This sequence belongs to the GrpE family. Homodimer.

The protein localises to the cytoplasm. In terms of biological role, participates actively in the response to hyperosmotic and heat shock by preventing the aggregation of stress-denatured proteins, in association with DnaK and GrpE. It is the nucleotide exchange factor for DnaK and may function as a thermosensor. Unfolded proteins bind initially to DnaJ; upon interaction with the DnaJ-bound protein, DnaK hydrolyzes its bound ATP, resulting in the formation of a stable complex. GrpE releases ADP from DnaK; ATP binding to DnaK triggers the release of the substrate protein, thus completing the reaction cycle. Several rounds of ATP-dependent interactions between DnaJ, DnaK and GrpE are required for fully efficient folding. The polypeptide is Protein GrpE (Brachyspira hyodysenteriae (strain ATCC 49526 / WA1)).